A 667-amino-acid polypeptide reads, in one-letter code: Holliday junction recognition protein (667 aa).

Residues 78–126 (LNGQAPEGDSESSGADTSLEENWPSCSSAMREASGDPRQRQPAVPGNTL) form a disordered region. 3 positions are modified to phosphoserine: S169, S185, and S195. Disordered regions lie at residues 181–201 (ISAK…GQGP) and 279–317 (RRRP…EPGK). The span at 279-297 (RRRPSRKQGLHKNRTHCPR) shows a compositional bias: basic residues. Residues S388, S424, S449, and S462 each carry the phosphoserine modification. The segment at 443–530 (YRSGSKSPGS…NSEPTGKAVW (88 aa)) is disordered. The segment covering 466–482 (GREKTERPGEALEDLRG) has biased composition (basic and acidic residues). Low complexity predominate over residues 496–515 (SCPSPEGSPSRSPSHSQLSS). A Glycyl lysine isopeptide (Lys-Gly) (interchain with G-Cter in SUMO2) cross-link involves residue K554. The residue at position 567 (S567) is a Phosphoserine. The tract at residues 596 to 617 (KRLNPDSPQQSSQKRSISPGCH) is disordered. Over residues 601-611 (DSPQQSSQKRS) the composition is skewed to polar residues. Position 613 is a phosphoserine (S613).

As to quaternary structure, interacts with CENPA (via CATD domain); the interaction is direct and specific for CENPA since it does not interact with H3.1- or H3.3-containing nucleosomes. Heterotrimer composed of HJURP, CENPA and histone H4, where HJURP interacts with the dimer formed by CENPA and histone H4 and prevents tetramerization of CENPA and H4. Identified in a centromere complex containing histones H2A, H2B and H4, and at least CENPA, CENPB, CENPC, CENPT, CENPN, HJURP, SUPT16H, SSRP1 and RSF1. Interacts with 14-3-3 family members in a phosphorylation-dependent manner. Interacts with MSH5 and NBN.

The protein resides in the nucleus. The protein localises to the nucleolus. It localises to the chromosome. It is found in the centromere. Functionally, centromeric protein that plays a central role in the incorporation and maintenance of histone H3-like variant CENPA at centromeres. Acts as a specific chaperone for CENPA and is required for the incorporation of newly synthesized CENPA molecules into nucleosomes at replicated centromeres. Prevents CENPA-H4 tetramerization and prevents premature DNA binding by the CENPA-H4 tetramer. Directly binds Holliday junctions. This is Holliday junction recognition protein (Hjurp) from Mus musculus (Mouse).